A 122-amino-acid chain; its full sequence is Putative iron-sulfur cluster insertion protein ErpA (122 aa).

Cysteine 50, cysteine 114, and cysteine 116 together coordinate iron-sulfur cluster.

Belongs to the HesB/IscA family. Homodimer. The cofactor is iron-sulfur cluster.

Functionally, required for insertion of 4Fe-4S clusters. The sequence is that of Putative iron-sulfur cluster insertion protein ErpA from Bordetella petrii (strain ATCC BAA-461 / DSM 12804 / CCUG 43448).